A 1274-amino-acid polypeptide reads, in one-letter code: Paired amphipathic helix protein Sin3a (1274 aa).

2 disordered regions span residues Met-1 to Ala-26 and His-85 to Ala-110. A Phosphoserine modification is found at Ser-10. Residues Gln-119–Gly-189 form the PAH 1 domain. The tract at residues Gln-119–Thr-196 is interaction with HCFC1. Glycyl lysine isopeptide (Lys-Gly) (interchain with G-Cter in SUMO2) cross-links involve residues Lys-122 and Lys-134. The interval Pro-205–Gln-297 is disordered. Residues Pro-205–Glu-479 are interaction with REST. A compositionally biased stretch (low complexity) spans Ser-228–Thr-237. Residues Lys-252 to Thr-266 show a composition bias toward polar residues. Residues Pro-267–Pro-282 are compositionally biased toward pro residues. A Phosphoserine modification is found at Ser-277. Thr-284 is subject to Phosphothreonine. Residues Thr-284–Gln-297 are compositionally biased toward polar residues. Residues Gln-300–Ala-383 form the PAH 2 domain. The disordered stretch occupies residues Asp-398 to Pro-443. Positions Gln-412–Cys-425 are enriched in polar residues. Positions Ser-457–Lys-526 constitute a PAH 3 domain. The tract at residues His-459–Lys-526 is interaction with SAP30. Lys-470 carries the post-translational modification N6-acetyllysine. The segment at Gly-524 to Ala-851 is interaction with NCOR1. The interactions with SUDS3 and SAP130 stretch occupies residues Tyr-525 to Gly-660. Residue Lys-564 forms a Glycyl lysine isopeptide (Lys-Gly) (interchain with G-Cter in SUMO2) linkage. The tract at residues Asn-688–Gly-830 is interactions with HDAC1 and ARID4B. At Ser-833 the chain carries Phosphoserine. Acidic residues predominate over residues Val-835–Glu-847. The segment at Val-835 to Ser-865 is disordered. The residue at position 861 (Ser-861) is a Phosphoserine. 2 positions are modified to N6-acetyllysine: Lys-866 and Lys-876. Residues Val-889–Arg-968 are interaction with OGT. A coiled-coil region spans residues Cys-904–Gly-933. Phosphoserine is present on residues Ser-941, Ser-1090, and Ser-1113. Positions Cys-1137–Met-1157 are disordered. A compositionally biased stretch (basic and acidic residues) spans Arg-1139–Met-1157.

As to quaternary structure, interacts with ARID4B, BRMS1L, HCFC1, HDAC1, HDAC2, MXI1, SAP30L, SAP130, SFPQ and TOPORS. Interacts with OGT (via TPRs 1-6); the interaction mediates transcriptional repression in parallel with histone deacetylase. Interacts with BAZ2A, MXD1, MXD3, MXD4, MBD2, DACH1, NCOR1, NR4A2, REST, RLIM, SAP30, SETDB1, SMYD2, and SUDS3. Interacts with PHF12 in a complex composed of HDAC1, PHF12 and SAP30. Interacts with TET1; the interaction recruits SIN3A to gene promoters. The large PER complex involved in the histone deacetylation is composed of at least HDAC1, PER2, SFPQ and SIN3A. Interacts with KLF11. Interacts with PPHLN1. Found in a complex with YY1, GON4L and HDAC1. Interacts (via PAH2) with FOXK1. Interacts with FOXK2. Found in a complex composed of at least SINHCAF, SIN3A, HDAC1, SAP30, RBBP4, OGT and TET1. Interacts with SINHCAF. Interacts with SPHK2. SUMO1 sumoylated by TOPORS. Probably desumoylated by SENP2. Widely expressed. Highest levels in testis, lung and thymus. Expressed at relatively high levels throughout brain development. In adult mice, expression is high in neurogenic regions such as the subventricular zone, rostral migratory stream, olfactory bulb and dentate gyrus.

Its subcellular location is the nucleus. It is found in the nucleolus. Acts as a transcriptional repressor. Corepressor for REST. Interacts with MXI1 to repress MYC responsive genes and antagonize MYC oncogenic activities. Also interacts with MXD1-MAX heterodimers to repress transcription by tethering SIN3A to DNA. Acts cooperatively with OGT to repress transcription in parallel with histone deacetylation. Involved in the control of the circadian rhythms. Required for the transcriptional repression of circadian target genes, such as PER1, mediated by the large PER complex through histone deacetylation. Cooperates with FOXK1 to regulate cell cycle progression probably by repressing cell cycle inhibitor genes expression. Required for cortical neuron differentiation and callosal axon elongation. This chain is Paired amphipathic helix protein Sin3a (Sin3a), found in Mus musculus (Mouse).